We begin with the raw amino-acid sequence, 599 residues long: Aspartate--tRNA(Asp/Asn) ligase (599 aa).

Glutamate 172 contributes to the L-aspartate binding site. The interval glutamine 196–lysine 199 is aspartate. An L-aspartate-binding site is contributed by arginine 218. ATP contacts are provided by residues arginine 218–glutamate 220 and glutamine 227. Histidine 455 contributes to the L-aspartate binding site. Glutamate 489 is a binding site for ATP. Arginine 496 lines the L-aspartate pocket. Glycine 541 to arginine 544 contacts ATP.

This sequence belongs to the class-II aminoacyl-tRNA synthetase family. Type 1 subfamily. Homodimer.

The protein resides in the cytoplasm. The catalysed reaction is tRNA(Asx) + L-aspartate + ATP = L-aspartyl-tRNA(Asx) + AMP + diphosphate. Functionally, aspartyl-tRNA synthetase with relaxed tRNA specificity since it is able to aspartylate not only its cognate tRNA(Asp) but also tRNA(Asn). Reaction proceeds in two steps: L-aspartate is first activated by ATP to form Asp-AMP and then transferred to the acceptor end of tRNA(Asp/Asn). This Herminiimonas arsenicoxydans protein is Aspartate--tRNA(Asp/Asn) ligase.